Consider the following 704-residue polypeptide: Elongation factor G (704 aa).

In terms of domain architecture, tr-type G spans 8–291 (DKVRNIGIMA…AVVDYLASPL (284 aa)). Residues 17-24 (AHIDAGKT), 90-94 (DTPGH), and 144-147 (NKMD) contribute to the GTP site.

It belongs to the TRAFAC class translation factor GTPase superfamily. Classic translation factor GTPase family. EF-G/EF-2 subfamily.

Its subcellular location is the cytoplasm. Functionally, catalyzes the GTP-dependent ribosomal translocation step during translation elongation. During this step, the ribosome changes from the pre-translocational (PRE) to the post-translocational (POST) state as the newly formed A-site-bound peptidyl-tRNA and P-site-bound deacylated tRNA move to the P and E sites, respectively. Catalyzes the coordinated movement of the two tRNA molecules, the mRNA and conformational changes in the ribosome. In Chlorobium phaeovibrioides (strain DSM 265 / 1930) (Prosthecochloris vibrioformis (strain DSM 265)), this protein is Elongation factor G.